The chain runs to 537 residues: 6-phosphogluconate dehydrogenase, decarboxylating 2, chloroplastic (537 aa).

A chloroplast-targeting transit peptide spans 1 to 44 (MRSEVPSSTSPSFLSPPFIHLPLLSLSSPTPLPHSSSSTFSLFS). NADP(+)-binding positions include 55–60 (GLAVMG), 78–80 (NRT), 122–124 (VKA), and asparagine 150. Substrate-binding positions include asparagine 150 and 176 to 178 (SGG). The Proton acceptor role is filled by lysine 230. 233-234 (HN) is a substrate binding site. Glutamate 237 functions as the Proton donor in the catalytic mechanism. Residues tyrosine 238, lysine 308, arginine 335, arginine 500, and histidine 506 each contribute to the substrate site.

The protein belongs to the 6-phosphogluconate dehydrogenase family. As to quaternary structure, homodimer.

It localises to the plastid. The protein resides in the chloroplast. The enzyme catalyses 6-phospho-D-gluconate + NADP(+) = D-ribulose 5-phosphate + CO2 + NADPH. The protein operates within carbohydrate degradation; pentose phosphate pathway; D-ribulose 5-phosphate from D-glucose 6-phosphate (oxidative stage): step 3/3. In terms of biological role, catalyzes the oxidative decarboxylation of 6-phosphogluconate to ribulose 5-phosphate and CO(2), with concomitant reduction of NADP to NADPH. The polypeptide is 6-phosphogluconate dehydrogenase, decarboxylating 2, chloroplastic (Spinacia oleracea (Spinach)).